Here is a 1009-residue protein sequence, read N- to C-terminus: Probable beta-galactosidase B (1009 aa).

The N-terminal stretch at 1 to 27 is a signal peptide; that stretch reads MKTIAGLSWISALSSLASLPNGLGVSA. Y96 is a substrate binding site. N106 carries N-linked (GlcNAc...) asparagine glycosylation. The substrate site is built by N141, A142, E143, and N201. The active-site Proton donor is E202. Y271 serves as a coordination point for substrate. Cysteines 277 and 330 form a disulfide. The Nucleophile role is filled by E314. Y379 contacts substrate. N467, N495, N547, N593, N632, N672, N707, N775, N782, N789, N795, and N914 each carry an N-linked (GlcNAc...) asparagine glycan.

Belongs to the glycosyl hydrolase 35 family.

It is found in the secreted. It catalyses the reaction Hydrolysis of terminal non-reducing beta-D-galactose residues in beta-D-galactosides.. Functionally, cleaves beta-linked terminal galactosyl residues from gangliosides, glycoproteins, and glycosaminoglycans. The chain is Probable beta-galactosidase B (lacB) from Pyrenophora tritici-repentis (strain Pt-1C-BFP) (Wheat tan spot fungus).